The chain runs to 79 residues: Acyl carrier protein (79 aa).

A Carrier domain is found at Glu-2 to Gly-77. Ser-37 is subject to O-(pantetheine 4'-phosphoryl)serine.

It belongs to the acyl carrier protein (ACP) family. Post-translationally, 4'-phosphopantetheine is transferred from CoA to a specific serine of apo-ACP by AcpS. This modification is essential for activity because fatty acids are bound in thioester linkage to the sulfhydryl of the prosthetic group.

Its subcellular location is the cytoplasm. The protein operates within lipid metabolism; fatty acid biosynthesis. In terms of biological role, carrier of the growing fatty acid chain in fatty acid biosynthesis. The protein is Acyl carrier protein of Bordetella avium (strain 197N).